Reading from the N-terminus, the 164-residue chain is HTH-type transcriptional regulator IscR (164 aa).

An HTH rrf2-type domain is found at 2-131 (RLTSKGRYAV…NNITLAELVN (130 aa)). Residues 28 to 51 (LADISERQGISLSYLEQLFSRLRK) constitute a DNA-binding region (H-T-H motif). [2Fe-2S] cluster contacts are provided by Cys92, Cys98, and Cys104. Positions 143–164 (NNDTRRTANGRPQETINVNLRA) are disordered. Over residues 152-164 (GRPQETINVNLRA) the composition is skewed to polar residues.

The cofactor is [2Fe-2S] cluster.

In terms of biological role, regulates the transcription of several operons and genes involved in the biogenesis of Fe-S clusters and Fe-S-containing proteins. The sequence is that of HTH-type transcriptional regulator IscR from Yersinia enterocolitica serotype O:8 / biotype 1B (strain NCTC 13174 / 8081).